We begin with the raw amino-acid sequence, 530 residues long: Tyrosinase (530 aa).

The signal sequence occupies residues 1 to 17 (MLLAALYCLLWSFRTSA). Topologically, residues 19 to 473 (HFPRACASSK…IKPYLEQAQR (455 aa)) are lumenal, melanosome. N-linked (GlcNAc...) asparagine glycosylation is present at Asn86. Cu cation is bound by residues His180, His202, and His211. Residues Asn230, Asn290, and Asn337 are each glycosylated (N-linked (GlcNAc...) asparagine). Cu cation is bound by residues His363 and His367. A glycan (N-linked (GlcNAc...) asparagine) is linked at Asn371. His390 serves as a coordination point for Cu cation. Residues 474 to 494 (IWPWLIGAAVVGSVLTAVLGG) form a helical membrane-spanning segment. At 495-530 (LTSLLCRRKRNQLPEEKQPLLMEKEDYHNLMYQSHL) the chain is on the cytoplasmic side.

Belongs to the tyrosinase family. Forms an OPN3-dependent complex with DCT in response to blue light in melanocytes. Cu(2+) is required as a cofactor. Glycosylated.

The protein resides in the melanosome membrane. The protein localises to the melanosome. The enzyme catalyses 2 L-dopa + O2 = 2 L-dopaquinone + 2 H2O. It carries out the reaction L-tyrosine + O2 = L-dopaquinone + H2O. The catalysed reaction is 2 5,6-dihydroxyindole-2-carboxylate + O2 = 2 indole-5,6-quinone-2-carboxylate + 2 H2O. Its function is as follows. This is a copper-containing oxidase that functions in the formation of pigments such as melanins and other polyphenolic compounds. Catalyzes the initial and rate limiting step in the cascade of reactions leading to melanin production from tyrosine. In addition to hydroxylating tyrosine to DOPA (3,4-dihydroxyphenylalanine), also catalyzes the oxidation of DOPA to DOPA-quinone, and possibly the oxidation of DHI (5,6-dihydroxyindole) to indole-5,6 quinone. This is Tyrosinase (TYR) from Bos taurus (Bovine).